The sequence spans 194 residues: Probable GTP-binding protein EngB (194 aa).

The EngB-type G domain maps to 23–194; it reads DKMEFAFVGR…LNFMEEKLNN (172 aa). GTP contacts are provided by residues 31–38, 58–62, 76–79, 142–145, and 173–175; these read GRSNVGKS, GRTQL, DLPG, TKID, and HSS. Mg(2+)-binding residues include S38 and T60.

Belongs to the TRAFAC class TrmE-Era-EngA-EngB-Septin-like GTPase superfamily. EngB GTPase family. Requires Mg(2+) as cofactor.

Its function is as follows. Necessary for normal cell division and for the maintenance of normal septation. The chain is Probable GTP-binding protein EngB from Fusobacterium nucleatum subsp. nucleatum (strain ATCC 25586 / DSM 15643 / BCRC 10681 / CIP 101130 / JCM 8532 / KCTC 2640 / LMG 13131 / VPI 4355).